Reading from the N-terminus, the 113-residue chain is Hydrogenase maturation factor HypA (113 aa).

His-2 contacts Ni(2+). 4 residues coordinate Zn(2+): Cys-73, Cys-76, Cys-89, and Cys-92.

Belongs to the HypA/HybF family.

Involved in the maturation of [NiFe] hydrogenases. Required for nickel insertion into the metal center of the hydrogenase. The chain is Hydrogenase maturation factor HypA from Chlorobaculum parvum (strain DSM 263 / NCIMB 8327) (Chlorobium vibrioforme subsp. thiosulfatophilum).